The sequence spans 358 residues: 3'(2'),5'-bisphosphate nucleotidase 2 (358 aa).

Catalysis depends on aspartate 54, which acts as the Proton acceptor. 4 residues coordinate Mg(2+): glutamate 77, aspartate 141, isoleucine 143, and aspartate 144. Threonine 146 acts as the Proton acceptor in catalysis. 6 residues coordinate adenosine 3',5'-bisphosphate: threonine 146, histidine 243, serine 272, lysine 275, arginine 289, and aspartate 302. Histidine 243, serine 272, lysine 275, arginine 289, and aspartate 302 together coordinate AMP. Aspartate 302 is a Mg(2+) binding site.

It belongs to the inositol monophosphatase superfamily. Mg(2+) is required as a cofactor.

It carries out the reaction 3'-phosphoadenylyl sulfate + H2O = adenosine 5'-phosphosulfate + phosphate. The catalysed reaction is adenosine 3',5'-bisphosphate + H2O = AMP + phosphate. The enzyme catalyses adenosine 2',5'-bisphosphate + H2O = AMP + phosphate. Functionally, phosphatase that converts adenosine 3'-phosphate 5'-phosphosulfate (PAPS) to adenosine 5'-phosphosulfate (APS) and 3'(2')-phosphoadenosine 5'-phosphate (PAP) to AMP. Regulates the flux of sulfur in the sulfur-activation pathway by converting PAPS to APS. Involved in salt tolerance. The polypeptide is 3'(2'),5'-bisphosphate nucleotidase 2 (HAL22) (Candida albicans (strain SC5314 / ATCC MYA-2876) (Yeast)).